Here is a 334-residue protein sequence, read N- to C-terminus: Catabolite repressor/activator (334 aa).

An HTH lacI-type domain is found at 1–58 (MKLDEIARLAGVSRTTASYVINGKAKQYRVSDKTVEKVMAVVREHNYHPNAVAAGLRA). The segment at residues 3–22 (LDEIARLAGVSRTTASYVIN) is a DNA-binding region (H-T-H motif).

Homotetramer.

Global transcriptional regulator, which plays an important role in the regulation of carbon metabolism. In Salmonella typhimurium (strain LT2 / SGSC1412 / ATCC 700720), this protein is Catabolite repressor/activator (cra).